A 301-amino-acid chain; its full sequence is ATP synthase gamma chain (301 aa).

The protein belongs to the ATPase gamma chain family. F-type ATPases have 2 components, CF(1) - the catalytic core - and CF(0) - the membrane proton channel. CF(1) has five subunits: alpha(3), beta(3), gamma(1), delta(1), epsilon(1). CF(0) has three main subunits: a, b and c.

The protein localises to the cell inner membrane. Produces ATP from ADP in the presence of a proton gradient across the membrane. The gamma chain is believed to be important in regulating ATPase activity and the flow of protons through the CF(0) complex. The protein is ATP synthase gamma chain of Helicobacter pylori (strain P12).